A 231-amino-acid polypeptide reads, in one-letter code: Large ribosomal subunit protein uL1 (231 aa).

It belongs to the universal ribosomal protein uL1 family. In terms of assembly, part of the 50S ribosomal subunit.

Functionally, binds directly to 23S rRNA. The L1 stalk is quite mobile in the ribosome, and is involved in E site tRNA release. Its function is as follows. Protein L1 is also a translational repressor protein, it controls the translation of the L11 operon by binding to its mRNA. This Buchnera aphidicola subsp. Acyrthosiphon pisum (strain APS) (Acyrthosiphon pisum symbiotic bacterium) protein is Large ribosomal subunit protein uL1.